Consider the following 108-residue polypeptide: Protein YcgL (108 aa).

The region spanning 12 to 96 (MFCVIYRSSK…PPEDLLKQHL (85 aa)) is the YcgL domain.

The sequence is that of Protein YcgL from Escherichia coli O127:H6 (strain E2348/69 / EPEC).